The sequence spans 243 residues: Venom nerve growth factor 3 (243 aa).

The signal sequence occupies residues 1-18 (MSMLCYTLIIAFLIGIWA). A propeptide spanning residues 19 to 125 (APKSEDNVPL…ALNRNIRAKR (107 aa)) is cleaved from the precursor. Positions 47–66 (GLKTSRNTDQRHPAPKKAED) are enriched in basic and acidic residues. The interval 47–67 (GLKTSRNTDQRHPAPKKAEDQ) is disordered. Intrachain disulfides connect Cys-139/Cys-204, Cys-182/Cys-232, and Cys-192/Cys-234. 2 N-linked (GlcNAc...) asparagine glycosylation sites follow: Asn-148 and Asn-151.

Belongs to the NGF-beta family. As to quaternary structure, homodimer; non-covalently linked. As to expression, expressed by the venom gland.

The protein resides in the secreted. Its function is as follows. Nerve growth factor is important for the development and maintenance of the sympathetic and sensory nervous systems. It stimulates division and differentiation of sympathetic and embryonic sensory neurons as well as basal forebrain cholinergic neurons in the brain. Its relevance in the snake venom is not clear. However, it has been shown to inhibit metalloproteinase-dependent proteolysis of platelet glycoprotein Ib alpha, suggesting a metalloproteinase inhibition to prevent metalloprotease autodigestion and/or protection against prey proteases. Binds a lipid between the two protein chains in the homodimer. The lipid-bound form promotes histamine relase from mouse mast cells, contrary to the lipid-free form. The protein is Venom nerve growth factor 3 of Tropidechis carinatus (Australian rough-scaled snake).